The primary structure comprises 501 residues: Raftlin-2 (501 aa).

Disordered stretches follow at residues 1–20 (MGCG…GKIF) and 196–239 (SWNE…RKGE). Gly2 carries N-myristoyl glycine lipidation. Cys3 carries S-palmitoyl cysteine lipidation. Residues 220–233 (GQYQMEQNGSPTSS) are compositionally biased toward polar residues. A Phosphoserine modification is found at Ser405. The tract at residues 407 to 449 (AQTPDKKASRHIKGEDKNKATSRSIGLDTTSSQPAESRHLPEE) is disordered. Thr409 bears the Phosphothreonine mark. Basic and acidic residues predominate over residues 410-425 (PDKKASRHIKGEDKNK). The segment covering 427–441 (TSRSIGLDTTSSQPA) has biased composition (polar residues). Ser430 bears the Phosphoserine mark.

This sequence belongs to the raftlin family.

It localises to the cell membrane. Its function is as follows. Upon bacterial lipopolysaccharide stimulation, mediates clathrin-dependent internalization of TLR4 in dendritic cells, resulting in activation of TICAM1-mediated signaling and subsequent IFNB1 production. May regulate B-cell antigen receptor-mediated signaling. This chain is Raftlin-2 (RFTN2), found in Homo sapiens (Human).